The primary structure comprises 82 residues: Transcription elongation factor 1 homolog (82 aa).

Zn(2+)-binding residues include Cys26, Cys29, Cys50, and Cys53.

Belongs to the ELOF1 family.

Its subcellular location is the nucleus. In terms of biological role, transcription elongation factor implicated in the maintenance of proper chromatin structure in actively transcribed regions. The polypeptide is Transcription elongation factor 1 homolog (Drosophila melanogaster (Fruit fly)).